Consider the following 862-residue polypeptide: Probable disease resistance protein At5g43740 (862 aa).

Positions 24–61 form a coiled coil; it reads RNYIHMMESNLDALQKTMEELKNGRDDLLGRVSIEEDK. Positions 135–438 constitute an NB-ARC domain; the sequence is MVAQEIIHKV…CEGFINPNRY (304 aa). 178–185 is a binding site for ATP; the sequence is GMGGVGKT. 4 LRR repeats span residues 511–532, 533–555, 558–580, and 582–604; these read IVRT…SKCP, NLST…FFRF, KLVV…ISNL, and SLQY…KKLR.

The protein belongs to the disease resistance NB-LRR family.

In terms of biological role, probable disease resistance protein. This Arabidopsis thaliana (Mouse-ear cress) protein is Probable disease resistance protein At5g43740.